The primary structure comprises 824 residues: Probable acyl-CoA dehydrogenase IBR3 (824 aa).

At G2 the chain carries N-acetylglycine. FAD contacts are provided by residues 555-565, 589-591, R706, Q776, and 776-780; these read FAMTEPQVASS, WTS, and QVHGA. The Microbody targeting signal signature appears at 822-824; that stretch reads SKL.

The protein belongs to the acyl-CoA dehydrogenase family. Requires FAD as cofactor.

The protein localises to the peroxisome. It carries out the reaction a 2,3-saturated acyl-CoA + A = a 2,3-dehydroacyl-CoA + AH2. In terms of biological role, involved with IBR1 and IBR10 in the peroxisomal beta-oxidation of indole-3-butyric acid (IBA) to form indole-3-acetic acid (IAA), a biologically active auxin. May be responsible for catalyzing the first step in IBA-CoA beta-oxidation. May play a role in defense response to pathogenic bacteria. The chain is Probable acyl-CoA dehydrogenase IBR3 from Arabidopsis thaliana (Mouse-ear cress).